Reading from the N-terminus, the 521-residue chain is Vang-like protein 2 (521 aa).

The segment at Met1–His81 is disordered. Residues Met1–Gly108 lie on the Cytoplasmic side of the membrane. Residues Gly15–Lys33 are compositionally biased toward basic residues. Basic and acidic residues predominate over residues Glu57–Asn67. A compositionally biased stretch (low complexity) spans Gly69–His81. Residues Val109–Leu129 traverse the membrane as a helical segment. Topologically, residues Pro130–Gly147 are extracellular. A helical membrane pass occupies residues Leu148–Phe168. The Cytoplasmic portion of the chain corresponds to Arg169–Val178. The chain crosses the membrane as a helical span at residues Phe179–Phe199. The Extracellular segment spans residues Tyr200–Gln217. Residues Phe218–Glu238 traverse the membrane as a helical segment. Over Leu239–Val521 the chain is Cytoplasmic.

It belongs to the Vang family. Homodimer and heterodimer with Vangl1. Interacts through its C-terminal region with the N-terminal half of DVL1, DVL2 and DVL3. The PDZ domain of DVL1, DVL2 and DVL3 is required for the interaction. Variants Glu-255 and Asn-464 impair interaction with the DVL proteins. Also interacts with the PDZ domains of MAGI3, SCRIB/SCRB1 and FZD3. Interacts with PRICKLE3. Primarily expressed in the brain and epididymis. Not detected in the cochlea of Lp mice.

It is found in the cell membrane. Functionally, involved in the control of early morphogenesis and patterning of both axial midline structures and the development of neural plate. Plays a role in the regulation of planar cell polarity, particularly in the orientation of stereociliary bundles in the cochlea. Required for polarization and movement of myocardializing cells in the outflow tract and seems to act via RHOA signaling to regulate this process. Required for cell surface localization of FZD3 and FZD6 in the inner ear. This is Vang-like protein 2 (Vangl2) from Mus musculus (Mouse).